The primary structure comprises 330 residues: Autoinducer 2 import system permease protein LsrD (330 aa).

The Cytoplasmic segment spans residues 1-4; the sequence is MRIR. Residues 5–25 form a helical membrane-spanning segment; that stretch reads YGWELALAALLVIEIVAFGAI. Residues 26–42 are Periplasmic-facing; that stretch reads NPRMLDLNMLLFSTSDF. The helical transmembrane segment at 43-63 threads the bilayer; it reads ICIGIVALPLTMVIVSGGIDI. The Cytoplasmic segment spans residues 64–67; that stretch reads SFGS. 2 consecutive transmembrane segments (helical) span residues 68–88 and 89–109; these read TIGLCAIALGVLFQSGVPMPL and AILLTLLLGALCGLINAGLII. Residues 110–115 are Cytoplasmic-facing; sequence YTKVNP. A helical transmembrane segment spans residues 116-136; the sequence is LVITLGTLYLFAGSALLLSGM. Residues 137–159 are Periplasmic-facing; sequence AGATGYEGIGGFPMAFTDFANLD. The helical transmembrane segment at 160 to 180 threads the bilayer; it reads VLGLPVPLIIFLICLLVFWLW. The Cytoplasmic portion of the chain corresponds to 181–209; the sequence is LHKTHAGRNVFLIGQSPRVAVYSAIPVNR. A helical membrane pass occupies residues 210 to 230; it reads TLCALYAMTGLASAVAAVLLV. Residues 231–237 lie on the Periplasmic side of the membrane; it reads SYFGSAR. The next 2 membrane-spanning stretches (helical) occupy residues 238-258 and 259-279; these read SDLGASFLMPAITAVVLGGAN and IYGGSGSIIGTAIAVLLVGYL. Topologically, residues 280–285 are periplasmic; that stretch reads QQGLQM. The helical transmembrane segment at 286–306 threads the bilayer; the sequence is AGVPNQVSSALSGALLIVVVV. Topologically, residues 307–330 are cytoplasmic; that stretch reads GRSVSLHRQQIKEWLARRANNPLP.

This sequence belongs to the binding-protein-dependent transport system permease family. AraH/RbsC subfamily. The complex is composed of two ATP-binding proteins (LsrA), two transmembrane proteins (LsrC and LsrD) and a solute-binding protein (LsrB).

It localises to the cell inner membrane. Part of the ABC transporter complex LsrABCD involved in autoinducer 2 (AI-2) import. Probably responsible for the translocation of the substrate across the membrane. The polypeptide is Autoinducer 2 import system permease protein LsrD (lsrD) (Escherichia coli (strain SMS-3-5 / SECEC)).